The primary structure comprises 247 residues: AA9 family lytic polysaccharide monooxygenase A (247 aa).

An N-terminal signal peptide occupies residues 1-19 (MVRLASLAVLGSVIATASA). Cu(2+) contacts are provided by H20 and H100. C60 and C185 are joined by a disulfide. Residue H165 participates in O2 binding. Cu(2+) is bound at residue Y182. N193 carries N-linked (GlcNAc...) asparagine glycosylation.

This sequence belongs to the polysaccharide monooxygenase AA9 family. It depends on Cu(2+) as a cofactor.

The protein localises to the secreted. The enzyme catalyses [(1-&gt;4)-beta-D-glucosyl]n+m + reduced acceptor + O2 = 4-dehydro-beta-D-glucosyl-[(1-&gt;4)-beta-D-glucosyl]n-1 + [(1-&gt;4)-beta-D-glucosyl]m + acceptor + H2O.. Its function is as follows. Lytic polysaccharide monooxygenase (LPMO) that depolymerizes polysaccharides via the oxidation of scissile alpha- or beta-(1-4)-glycosidic bonds, yielding C4 oxidation products. Catalysis by LPMOs requires the reduction of the active-site copper from Cu(II) to Cu(I) by a reducing agent and H(2)O(2) or O(2) as a cosubstrate. Shows C4-oxidative cleavage of amorphous cellulose and soluble cello-oligosaccharides. Also active on xyloglucan, mixed-linkage beta-glucan, and glucomannan. Not active on crystalline forms of cellulose. Has higher affinity for linear substrates compared to branched substrates. Catalyzes a fast and specific peroxygenase reaction that is at least two orders of magnitude faster than the apparent monooxygenase reaction. In Schizophyllum commune (strain H4-8 / FGSC 9210) (Split gill fungus), this protein is AA9 family lytic polysaccharide monooxygenase A.